The sequence spans 888 residues: 3-hydroxy-3-methylglutaryl-coenzyme A reductase (888 aa).

Topologically, residues 1–9 (MLSRLFRMH) are cytoplasmic. A helical membrane pass occupies residues 10 to 39 (GLFVASHPWEVIVGTVTLTICMMSMNMFTG). Topologically, residues 40-56 (NNKICGWNYECPKLEED) are lumenal. The chain crosses the membrane as a helical span at residues 57–78 (VLSSDIIILTITRCIAILYIYF). Residues 61 to 218 (DIIILTITRC…MTFFPACVSL (158 aa)) form the SSD domain. The INSIG-binding motif signature appears at 75–78 (YIYF). Residues 79–89 (QFQNLRQLGSK) are Cytoplasmic-facing. Lys89 is covalently cross-linked (Glycyl lysine isopeptide (Lys-Gly) (interchain with G-Cter in ubiquitin)). A helical transmembrane segment spans residues 90–114 (YILGIAGLFTIFSSFVFSTVVIHFL). The Lumenal portion of the chain corresponds to 115-123 (DKELTGLNE). Residues 124–149 (ALPFFLLLVDLSRASALAKFALSSNS) form a helical membrane-spanning segment. Topologically, residues 150–159 (QDEVRENIAR) are cytoplasmic. Residues 160–187 (GMAILGPTFTLDALVECLVIGVGTMSGV) traverse the membrane as a helical segment. Residues 188–191 (RQLE) are Lumenal-facing. Residues 192 to 220 (IMCCFGCMSVLANYFVFMTFFPACVSLVL) form a helical membrane-spanning segment. Residues 221-248 (ELSRESREGRPIWQLSHFARVLEEEENK) lie on the Cytoplasmic side of the membrane. Lys248 participates in a covalent cross-link: Glycyl lysine isopeptide (Lys-Gly) (interchain with G-Cter in ubiquitin). A helical membrane pass occupies residues 249 to 275 (PNPVTQRVKMIMSLGLVLVHAHSRWIA). At 276-314 (DPSPQNSTADNSKVSLGLDENVSKRIEPSVSLWQFYLSK) the chain is on the lumenal side. N-linked (GlcNAc...) asparagine glycosylation is found at Asn281 and Asn296. The helical transmembrane segment at 315 to 339 (MISMDIEQVITLSLALLLAVKYIFF) threads the bilayer. The Cytoplasmic segment spans residues 340–888 (EQAETESTLS…LQGTCTKKAA (549 aa)). Catalysis depends on charge relay system residues Glu559, Lys691, and Asp767. Catalysis depends on His866, which acts as the Proton donor. Position 872 is a phosphoserine; by AMPK (Ser872).

It belongs to the HMG-CoA reductase family. In terms of assembly, homotetramer. Homodimer. Interacts (via its SSD) with INSIG1; the interaction, accelerated by sterols, leads to the recruitment of HMGCR to AMFR/gp78 for its ubiquitination by the sterol-mediated ERAD pathway. Interacts with UBIAD1. Post-translationally, undergoes sterol-mediated ubiquitination and ER-associated degradation (ERAD). Accumulation of sterols in the endoplasmic reticulum (ER) membrane, triggers binding of the reductase to the ER membrane protein INSIG1 or INSIG2. The INSIG1 binding leads to the recruitment of the ubiquitin ligase, AMFR/gp78, RNF139 or RNF145, initiating ubiquitination of the reductase. The ubiquitinated reductase is then extracted from the ER membrane and delivered to cytosolic 26S proteosomes by a mechanism probably mediated by the ATPase Valosin-containing protein VCP/p97. The INSIG2-binding leads to the recruitment of the ubiquitin ligase RNF139, initiating ubiquitination of the reductase. Lys-248 is the main site of ubiquitination. Ubiquitination is enhanced by the presence of a geranylgeranylated protein. N-glycosylated. Deglycosylated by NGLY1 on release from the endoplasmic reticulum (ER) in a sterol-mediated manner. In terms of processing, phosphorylated. Phosphorylation at Ser-872 reduces the catalytic activity.

The protein localises to the endoplasmic reticulum membrane. Its subcellular location is the peroxisome membrane. It catalyses the reaction (R)-mevalonate + 2 NADP(+) + CoA = (3S)-3-hydroxy-3-methylglutaryl-CoA + 2 NADPH + 2 H(+). The protein operates within metabolic intermediate biosynthesis; (R)-mevalonate biosynthesis; (R)-mevalonate from acetyl-CoA: step 3/3. Regulated by a negative feedback mechanism through sterols and non-sterol metabolites derived from mevalonate. Phosphorylation at Ser-872 down-regulates the catalytic activity. In terms of biological role, catalyzes the conversion of (3S)-hydroxy-3-methylglutaryl-CoA (HMG-CoA) to mevalonic acid, the rate-limiting step in the synthesis of cholesterol and other isoprenoids, thus plays a critical role in cellular cholesterol homeostasis. This Bos taurus (Bovine) protein is 3-hydroxy-3-methylglutaryl-coenzyme A reductase (HMGCR).